A 447-amino-acid polypeptide reads, in one-letter code: Cysteine--tRNA ligase (447 aa).

Position 28 (C28) interacts with Zn(2+). Positions P30–N40 match the 'HIGH' region motif. Zn(2+)-binding residues include C211, H236, and E240. Positions K268–S272 match the 'KMSKS' region motif. K271 serves as a coordination point for ATP.

The protein belongs to the class-I aminoacyl-tRNA synthetase family. In terms of assembly, monomer. Zn(2+) serves as cofactor.

The protein resides in the cytoplasm. It carries out the reaction tRNA(Cys) + L-cysteine + ATP = L-cysteinyl-tRNA(Cys) + AMP + diphosphate. The sequence is that of Cysteine--tRNA ligase from Streptococcus pyogenes serotype M28 (strain MGAS6180).